A 345-amino-acid polypeptide reads, in one-letter code: Aminopeptidase YpdE (345 aa).

A divalent metal cation contacts are provided by His-62 and Asp-166. Catalysis depends on Glu-198, which acts as the Proton acceptor. A divalent metal cation is bound by residues Glu-199, Asp-221, and His-308.

Belongs to the peptidase M42 family. It depends on Co(2+) as a cofactor. Requires Ni(2+) as cofactor. The cofactor is Mn(2+). Cu(2+) is required as a cofactor.

Functionally, has a broad aminopeptidase activity on non-blocked peptides by progressively cleaving amino acids off the peptide substrate. Aminopeptidase activity stops at the residue before the first proline in the peptide. Cannot cleave when proline is the first N-terminal residue. In Escherichia coli (strain K12), this protein is Aminopeptidase YpdE (ypdE).